The following is a 233-amino-acid chain: Metallo-beta-lactamase domain-containing protein 1 (233 aa).

7 residues coordinate Zn(2+): His96, His98, Asp100, His101, His152, Asp174, and His213.

It belongs to the metallo-beta-lactamase superfamily. Glyoxalase II family. In terms of assembly, homodimer. It depends on Zn(2+) as a cofactor.

It is found in the cytoplasm. It localises to the cytosol. The protein localises to the nucleus. It catalyses the reaction a ribonucleotidyl-ribonucleotide-RNA + H2O = a 3'-end ribonucleotide-RNA + a 5'-end 5'-phospho-ribonucleoside-RNA + H(+). Endoribonuclease that catalyzes the hydrolysis of histone-coding pre-mRNA 3'-end. Involved in histone pre-mRNA processing during the S-phase of the cell cycle, which is required for entering/progressing through S-phase. Cleaves histone pre-mRNA at a major and a minor cleavage site after the 5'-ACCCA-3' and the 5'-ACCCACA-3' sequence, respectively, and located downstream of the stem-loop. May require the presence of the HDE element located at the histone pre-RNA 3'-end to avoid non-specific cleavage. The chain is Metallo-beta-lactamase domain-containing protein 1 (mblac1) from Xenopus laevis (African clawed frog).